A 494-amino-acid chain; its full sequence is UPF0371 protein M28_Spy1076 (494 aa).

It belongs to the UPF0371 family.

This chain is UPF0371 protein M28_Spy1076, found in Streptococcus pyogenes serotype M28 (strain MGAS6180).